The sequence spans 308 residues: Probable manganese-dependent inorganic pyrophosphatase (308 aa).

Mn(2+) is bound by residues H9, D13, D15, D75, H97, and D149.

This sequence belongs to the PPase class C family. Mn(2+) serves as cofactor.

The protein localises to the cytoplasm. The catalysed reaction is diphosphate + H2O = 2 phosphate + H(+). This is Probable manganese-dependent inorganic pyrophosphatase from Bacillus pumilus (strain SAFR-032).